The sequence spans 1610 residues: MNTRKEELQDRAIVRIAAHLPDLIVYGDFSPQRPSVDYFDGVLMFVDISGFTAMTEKFSTAMYMDRGAEQLVEILNYYISAIVEKVLIFGGDILKFAGDALLALWKVERKQLKNIITVVIKCSLEIHGLFGTQESEEGLDIRVKIGLAAGHISMLVFGDETRNHFLVIGQAVDDVRLAQNMARMNDVILSPNCWQLCDRSMIEIERIPDQRAVKVNFLKPPPSFNFDEFFNKCMTFMDYYPSGDHKNLLRLACMLESDPDLELSLQKYVMESILKQIDDKQLRGYLSELRPVTIVFVNLMFQDQNKAEVIGSAIQDACVHISSVLKVFRGQINKVFMFDKGCSFLCVFGFPGEKAPDEVTHALESAVDIFDFCSQVHKIHTVSIGVASGIVFCGIVGHTVRHEYTVIGQKVNIAARMMMYYPGIVTCDSVTYNGSNLPPYFFKELPKKLMKGVGDSGPVYQCLGLNEKVMFGMAYLTCNRNEGYPLLGRDKEIKYFMCTMKEFLMSNCSRVLMYEGLSGFGKSRILMEIEYLAQGENHRTIAIALTKVSFHQNFYTIQILMANVLGLDTCKHYKERQTNLQNKVKTLLDEKFHCLLNDIFHVQFPISREISKMSTFRKQKQLEALFMKILEQTVKEERIIFIIDEAQFVDYASWIFMEKLIRTVPIFIIMSLSPFTEIPCAAASAIMKNRNTTYVTLGAVQPNDIRNKVCLDLNVSSIPKELDLYLVEGSCGIPFYCEELVKNLDHHRVLVFQQMETEEKTKVTWNNLFKNFIKPTEEFKMSGLGNEEGTEEICKLASGVRLKNLSPPASLKEISLVQLDSMSLSHQMLVRCAAIIGLTFTTELLFEILPCWNMKMMIKALATLVESNIFDCFRDGKDLRLALKQNAASFEVHNRSLSLQPTEGIAHGEEEELRELESEVIECHIIRFCKPMMQKTAYELWLKDQKKAMHLKCARFLEENAHRCDHCRSGDFIPYHHFTVDIRLNTLDMDTIKKMATSHGFETEEEIKISRAGIPKNSELFSENLSPEEIGERILGFFDVILTKMKTSKEDIIPLESCQCEEILEIVILPLAQHFLALGENNKALYYFLEITSAYLTLGDNYMAYMYLNEGERLLKTLKKEKSWSQTFESATFYSLKGQVCFNMGQMVLAKKMLRKALKLLNRIFPYNLISLFLHTHMEKNRHFHYVTQQAQESSPPGKKRLAHLYQQTACFSLLWQIYSLNYFFHHKYYGHLAAMMELNTALETQNDFQIIKAYLDYAMYHHLAGYQGVWFKYEVKAMEQIFNLPLKGEGIEIVAYVAGKLSYIKLMMGYLDLAIELGARAHKMWALLQNPNQHYVVLCRLSKSLFLKNRYKHLIQMLRRLWDLSVAEGHIISKAFFYLVCLDIMLYSGFVYRTFEECLEFIIQNEDNRILKFQSGLLLGLYSSIAIWYGRLQEWDNFYVFSNRAKTLVSRRTPTILYYDGVSRYMEGQVLQLQKQIEEQSETAQDSGVELLKSLESLVAQNTTGPVFYPRLYHLMAYICILMGDGQNCDLFLNTALKLSEIQGNVLEKCWLNMSKEWWYSNCTLTEDQWLHTILSLPAWEKIVSGKVNIHDVQKNKFLMRVNILDNPF.

2 Guanylate cyclase domains span residues 42–179 (VLMF…RLAQ) and 293–418 (TIVF…ARMM). Mg(2+) contacts are provided by aspartate 47 and isoleucine 48. 47–52 (DISGFT) is an ATP binding site. Lysine 95 is a binding site for hydrogencarbonate. A Mg(2+)-binding site is contributed by aspartate 99. Residues aspartate 99 and lysine 144 each coordinate ATP. Valine 167, arginine 176, and methionine 337 together coordinate hydrogencarbonate. Residues valine 406 and 412–416 (NIAAR) each bind ATP.

Belongs to the adenylyl cyclase class-4/guanylyl cyclase family. The cofactor is Mg(2+). Mn(2+) is required as a cofactor.

It localises to the cell membrane. It is found in the cytoplasm. The protein resides in the cytoskeleton. Its subcellular location is the perinuclear region. The protein localises to the nucleus. It localises to the cell projection. It is found in the cilium. The enzyme catalyses ATP = 3',5'-cyclic AMP + diphosphate. With respect to regulation, activated by manganese or magnesium ions. In the presence of magnesium ions, the enzyme is activated by bicarbonate. Calcium mildly increases the enzyme activity, also in the presence of magnesium ions. Its function is as follows. Catalyzes the formation of the signaling molecule cAMP. May function as sensor that mediates responses to changes in cellular bicarbonate and CO(2) levels. Has a critical role in mammalian spermatogenesis by producing the cAMP which regulates cAMP-responsive nuclear factors indispensable for sperm maturation in the epididymis. Induces capacitation, the maturational process that sperm undergo prior to fertilization. Involved in ciliary beat regulation. This Oryctolagus cuniculus (Rabbit) protein is Adenylate cyclase type 10 (ADCY10).